A 272-amino-acid polypeptide reads, in one-letter code: MTVFPAGQQFQTEGECLPSYQVRLACRAGQADTTAGVAPGFVQGNLAILPEKYAAAFHRFCQLNPKPCPIIGMSDVGNPQIPALGLDLDIRTDLPRYRVWRDGELIEEPTDVMAHWRDDLVAFVVGCSFSFEEALLADDIPIRHIERKVRVPMYRTNIACTPAGPFAGPMVVSMRPLKPADAIRAVQITSRFPSVHGAPVHIGLPQSIGIADIANPDYGDPVPIAPDELPVFWACGVTPQAVIAAAKVPFAITHAPGLMLVTDLKNKHLAVL.

It belongs to the D-glutamate cyclase family.

The sequence is that of Putative hydro-lyase RPD_1846 from Rhodopseudomonas palustris (strain BisB5).